The primary structure comprises 367 residues: Succinyl-diaminopimelate desuccinylase (367 aa).

His67 serves as a coordination point for Zn(2+). Residue Asp69 is part of the active site. Asp98 provides a ligand contact to Zn(2+). Glu128 functions as the Proton acceptor in the catalytic mechanism. Positions 129, 157, and 342 each coordinate Zn(2+).

The protein belongs to the peptidase M20A family. DapE subfamily. In terms of assembly, homodimer. It depends on Zn(2+) as a cofactor. Requires Co(2+) as cofactor.

The enzyme catalyses N-succinyl-(2S,6S)-2,6-diaminopimelate + H2O = (2S,6S)-2,6-diaminopimelate + succinate. It functions in the pathway amino-acid biosynthesis; L-lysine biosynthesis via DAP pathway; LL-2,6-diaminopimelate from (S)-tetrahydrodipicolinate (succinylase route): step 3/3. Its function is as follows. Catalyzes the hydrolysis of N-succinyl-L,L-diaminopimelic acid (SDAP), forming succinate and LL-2,6-diaminopimelate (DAP), an intermediate involved in the bacterial biosynthesis of lysine and meso-diaminopimelic acid, an essential component of bacterial cell walls. This chain is Succinyl-diaminopimelate desuccinylase, found in Campylobacter hominis (strain ATCC BAA-381 / DSM 21671 / CCUG 45161 / LMG 19568 / NCTC 13146 / CH001A).